Consider the following 406-residue polypeptide: Ribonuclease D (406 aa).

One can recognise a 3'-5' exonuclease domain in the interval 26-193; that stretch reads LITQTTDLEI…VYLLLKKQLE (168 aa). In terms of domain architecture, HRDC spans 231–312; the sequence is KPRELAVLQK…HEGLEVDLAT (82 aa).

This sequence belongs to the RNase D family. It depends on a divalent metal cation as a cofactor.

Its subcellular location is the cytoplasm. The enzyme catalyses Exonucleolytic cleavage that removes extra residues from the 3'-terminus of tRNA to produce 5'-mononucleotides.. Its function is as follows. Exonuclease involved in the 3' processing of various precursor tRNAs. Initiates hydrolysis at the 3'-terminus of an RNA molecule and releases 5'-mononucleotides. This chain is Ribonuclease D, found in Bartonella henselae (strain ATCC 49882 / DSM 28221 / CCUG 30454 / Houston 1) (Rochalimaea henselae).